The following is a 195-amino-acid chain: Small ribosomal subunit protein uS4c (195 aa).

The 62-residue stretch at 82 to 143 (MRLDNILFRL…KQRSKALIQN (62 aa)) folds into the S4 RNA-binding domain.

Belongs to the universal ribosomal protein uS4 family. As to quaternary structure, part of the 30S ribosomal subunit. Contacts protein S5. The interaction surface between S4 and S5 is involved in control of translational fidelity.

The protein localises to the plastid. It is found in the chloroplast. In terms of biological role, one of the primary rRNA binding proteins, it binds directly to 16S rRNA where it nucleates assembly of the body of the 30S subunit. With S5 and S12 plays an important role in translational accuracy. The chain is Small ribosomal subunit protein uS4c (rps4) from Gladiolus murielae (Abyssinian gladiolus).